A 193-amino-acid chain; its full sequence is CASP-like protein 1D1 (193 aa).

The interval 1–24 (MGYETKSTLDTERSTAPGTGTTTK) is disordered. At 1–30 (MGYETKSTLDTERSTAPGTGTTTKSCSMTQ) the chain is on the cytoplasmic side. The span at 14-24 (STAPGTGTTTK) shows a compositional bias: polar residues. The chain crosses the membrane as a helical span at residues 31-51 (VVLRFVLFAATLTSIVVMVTS). The Extracellular portion of the chain corresponds to 52 to 76 (KQTKNIFLPGTPIRIPAAEFTNSPA). A helical transmembrane segment spans residues 77–97 (LIYFVVALSVACFYSIVSTFV). At 98-108 (TVSAFKKHSCS) the chain is on the cytoplasmic side. A helical membrane pass occupies residues 109-129 (AVLLLNLAIMDAVMVGIVASA). Residues 130–162 (TGAGGGVAYLGLKGNKEVRWGKICHIYDKFCRH) are Extracellular-facing. Residues 163 to 183 (VGGAIAVSLFASVVLLLLSII) form a helical membrane-spanning segment. Topologically, residues 184–193 (SVLSLYKKIR) are cytoplasmic.

Belongs to the Casparian strip membrane proteins (CASP) family. As to quaternary structure, homodimer and heterodimers.

The protein resides in the cell membrane. In Arabidopsis thaliana (Mouse-ear cress), this protein is CASP-like protein 1D1.